The primary structure comprises 154 residues: Endoribonuclease YbeY (154 aa).

Residues His-120, His-124, and His-130 each contribute to the Zn(2+) site.

Belongs to the endoribonuclease YbeY family. Zn(2+) serves as cofactor.

The protein localises to the cytoplasm. In terms of biological role, single strand-specific metallo-endoribonuclease involved in late-stage 70S ribosome quality control and in maturation of the 3' terminus of the 16S rRNA. The sequence is that of Endoribonuclease YbeY from Leptospira biflexa serovar Patoc (strain Patoc 1 / Ames).